The primary structure comprises 251 residues: Regulator of G-protein signaling 9-binding protein B (251 aa).

The Cytoplasmic segment spans residues 1–230 (MPLQNVKVAD…NSKGCCSDGQ (230 aa)). 2 coiled-coil regions span residues 52 to 94 (HLRD…ELER) and 158 to 187 (ANKASLEYQEIEEEILKVDNMITDMEMKVN). A helical; Anchor for type IV membrane protein transmembrane segment spans residues 231–250 (LIVFLLLCGTALVAITLYSI). Position 251 (Leu251) is a topological domain, extracellular.

It belongs to the RGS7BP/RGS9BP family.

Its subcellular location is the membrane. In terms of biological role, regulator of G protein-coupled receptor (GPCR) signaling. Probably acts by regulating the activity of some 'R7' family protein (RGS6, RGS7, RGS9 and/or RGS11). The polypeptide is Regulator of G-protein signaling 9-binding protein B (rgs9bp-b) (Xenopus laevis (African clawed frog)).